A 292-amino-acid chain; its full sequence is Probable septum site-determining protein MinC (292 aa).

Residues 112 to 188 (DTAPPNDVAT…PQSSSALVIT (77 aa)) form a disordered region. Residues 128-137 (EATAEAAAKA) show a composition bias toward low complexity. The segment covering 140–150 (QDDEAYGEQAD) has biased composition (acidic residues). The span at 171-185 (ANRPTATPPQSSSAL) shows a compositional bias: polar residues.

Belongs to the MinC family. As to quaternary structure, interacts with MinD and FtsZ.

Functionally, cell division inhibitor that blocks the formation of polar Z ring septums. Rapidly oscillates between the poles of the cell to destabilize FtsZ filaments that have formed before they mature into polar Z rings. Prevents FtsZ polymerization. This Bordetella bronchiseptica (strain ATCC BAA-588 / NCTC 13252 / RB50) (Alcaligenes bronchisepticus) protein is Probable septum site-determining protein MinC.